The sequence spans 303 residues: Oxygen-dependent coproporphyrinogen-III oxidase (303 aa).

Ser94 serves as a coordination point for substrate. Residues His98 and His108 each contribute to the a divalent metal cation site. Catalysis depends on His108, which acts as the Proton donor. 110 to 112 (NVR) provides a ligand contact to substrate. His147 and His177 together coordinate a divalent metal cation. Positions 242–277 (YVEFNLVYDRGTLFGLQTGGRTESILMSLPPLVRWE) are important for dimerization. Substrate is bound at residue 260 to 262 (GGR).

Belongs to the aerobic coproporphyrinogen-III oxidase family. As to quaternary structure, homodimer. A divalent metal cation serves as cofactor.

The protein resides in the cytoplasm. It catalyses the reaction coproporphyrinogen III + O2 + 2 H(+) = protoporphyrinogen IX + 2 CO2 + 2 H2O. It participates in porphyrin-containing compound metabolism; protoporphyrin-IX biosynthesis; protoporphyrinogen-IX from coproporphyrinogen-III (O2 route): step 1/1. Its function is as follows. Involved in the heme biosynthesis. Catalyzes the aerobic oxidative decarboxylation of propionate groups of rings A and B of coproporphyrinogen-III to yield the vinyl groups in protoporphyrinogen-IX. In Saccharophagus degradans (strain 2-40 / ATCC 43961 / DSM 17024), this protein is Oxygen-dependent coproporphyrinogen-III oxidase.